The sequence spans 747 residues: MSVHALRELFKHKGEKNYEVFSMEDFIGRLESEIGLNDSVVSQGRSLISSISHENFGTVQATDIQDAAAIYNKMQMLVNDYGFERVSSSDPQVRAREERVRENQITAATMAAIACADETKYIRALRGITKAKASNEDHVKVVQHQFNGPAGGIQVFENGVGLENYNEKSQRDFRVVTIGYNLAASRQDEFAERIYPTTVINPIEGGVVQVLPYIAVMKDVYHEVSGVKMDNEEVNMVEAYRDPSILDDESIALIPALDPAGSNADFFVDPALVPPYTIKNEQNLTITTAPLKANVRLDLMGNSNANLLIQRGMLEVSDTIDPAGRLKNLFVLLGGKVVKFKVDRLPRAVFQPDLVGDTRNAVIRFDSDDLVVSGDTTFIDGSADGVINDLKTAKLSLRLSVGFGGTISLSKGDSKFGATDTYVDKVLNEDGQVMDNADPAVKAILDQLTDLAVIGFELDTRFTNTNRRQRGHLLQTRALQFRHPIPMHAPVTLPMDTMTDEGPGEVVKALTVNTNIRNSNNAVKRMLNYLAQLREVVHNGYNRPKFGIIEGALSAVMRPTYRYKELDLEKVIDTIKSKDRWDDVCAAILNCVKAELFPAHRDSNIEAAFRVISGNQDETPMYLFCSDKEIANYLMTKGDDRTLGAYLKYDIVSTNNQLFDGKLVVIPTRAVQQENDILSWGQFFYVSTVIADLPITRGGHQVTREIAAIPFNLHVNNIPFALEFKITGFQKVMGETQFNGKLADLKP.

As to quaternary structure, homohexmer. Post-translationally, cleaved by the capsid maturation protease during capsid maturation.

It localises to the virion. Its function is as follows. Capsid protein self-assembles to form an icosahedral capsid with a T=27 symmetry, about 120 nm in diameter, and consisting of 1560 capsid proteins. The capsid encapsulates the genomic DNA. The 12 pentameric vertices of the capsid are occupied by other proteins. The polypeptide is Major capsid protein (Pseudomonas phage phiKZ).